A 140-amino-acid polypeptide reads, in one-letter code: ATP synthase epsilon chain (140 aa).

The protein belongs to the ATPase epsilon chain family. As to quaternary structure, F-type ATPases have 2 components, CF(1) - the catalytic core - and CF(0) - the membrane proton channel. CF(1) has five subunits: alpha(3), beta(3), gamma(1), delta(1), epsilon(1). CF(0) has three main subunits: a, b and c.

The protein localises to the cell inner membrane. Produces ATP from ADP in the presence of a proton gradient across the membrane. This chain is ATP synthase epsilon chain, found in Xanthomonas axonopodis pv. citri (strain 306).